The primary structure comprises 205 residues: Ribosomal RNA small subunit methyltransferase G (205 aa).

Residues G70, L75, 124 to 125, and R138 each bind S-adenosyl-L-methionine; that span reads IE.

This sequence belongs to the methyltransferase superfamily. RNA methyltransferase RsmG family.

It localises to the cytoplasm. It carries out the reaction guanosine(527) in 16S rRNA + S-adenosyl-L-methionine = N(7)-methylguanosine(527) in 16S rRNA + S-adenosyl-L-homocysteine. Specifically methylates the N7 position of guanine in position 527 of 16S rRNA. The chain is Ribosomal RNA small subunit methyltransferase G from Ruegeria sp. (strain TM1040) (Silicibacter sp.).